The primary structure comprises 408 residues: Putative ankyrin repeat protein L483 (408 aa).

ANK repeat units follow at residues 78–107 (SLNKCLIKSCKKNKLNIIKYLVSLGADIKA), 108–137 (GDDCAVQLASQNGHLEVIEYLVAQGANIRA), 139–167 (NDYAVIWASRNGYLDIVKYLVSQGADIRA), 168–197 (NNDYAVRWASRNGHLKVVKYLVSLGANIRT), 198–227 (ENDYAIKYASENGYLRIVEYLVSQGADIRA), 229–257 (NDYAVGLASSNGHFEVVEYLVSQGANIRV), 259–287 (NDYAVRLASSNGHLEVVKYLVSLRANIRA), 288–317 (RCDFAIKWSSSNGHLEVVKYLVSQGADIRS), 318–347 (QNDYAVRYASTNGHLEVVKYLVGQGADIRT), 349–377 (DDYAVRWASRGGCLEVVKYLVDQGANIRA), and 378–407 (KDDYAVKWASEKGHLEIVKFLISQGAVLTK).

The protein is Putative ankyrin repeat protein L483 of Acanthamoeba polyphaga (Amoeba).